The chain runs to 833 residues: Glycerol-3-phosphate acyltransferase (833 aa).

An HXXXXD motif motif is present at residues 309-314 (CHRSHI).

It belongs to the GPAT/DAPAT family.

It localises to the cell inner membrane. The enzyme catalyses sn-glycerol 3-phosphate + an acyl-CoA = a 1-acyl-sn-glycero-3-phosphate + CoA. It functions in the pathway phospholipid metabolism; CDP-diacylglycerol biosynthesis; CDP-diacylglycerol from sn-glycerol 3-phosphate: step 1/3. This chain is Glycerol-3-phosphate acyltransferase, found in Pseudomonas savastanoi pv. phaseolicola (strain 1448A / Race 6) (Pseudomonas syringae pv. phaseolicola (strain 1448A / Race 6)).